Consider the following 214-residue polypeptide: Thymidylate kinase (214 aa).

14–21 is an ATP binding site; sequence GLEGAGKT.

Belongs to the thymidylate kinase family.

It carries out the reaction dTMP + ATP = dTDP + ADP. In terms of biological role, phosphorylation of dTMP to form dTDP in both de novo and salvage pathways of dTTP synthesis. This chain is Thymidylate kinase, found in Mannheimia succiniciproducens (strain KCTC 0769BP / MBEL55E).